Consider the following 144-residue polypeptide: Large ribosomal subunit protein uL16 (144 aa).

Belongs to the universal ribosomal protein uL16 family. In terms of assembly, part of the 50S ribosomal subunit.

In terms of biological role, binds 23S rRNA and is also seen to make contacts with the A and possibly P site tRNAs. The polypeptide is Large ribosomal subunit protein uL16 (Oceanobacillus iheyensis (strain DSM 14371 / CIP 107618 / JCM 11309 / KCTC 3954 / HTE831)).